The sequence spans 141 residues: Nucleoside diphosphate kinase (141 aa).

ATP contacts are provided by lysine 11, phenylalanine 59, arginine 87, threonine 93, arginine 104, and asparagine 114. Residue histidine 117 is the Pros-phosphohistidine intermediate of the active site.

It belongs to the NDK family. As to quaternary structure, homotetramer. Mg(2+) serves as cofactor.

The protein localises to the cytoplasm. The enzyme catalyses a 2'-deoxyribonucleoside 5'-diphosphate + ATP = a 2'-deoxyribonucleoside 5'-triphosphate + ADP. The catalysed reaction is a ribonucleoside 5'-diphosphate + ATP = a ribonucleoside 5'-triphosphate + ADP. Functionally, major role in the synthesis of nucleoside triphosphates other than ATP. The ATP gamma phosphate is transferred to the NDP beta phosphate via a ping-pong mechanism, using a phosphorylated active-site intermediate. The sequence is that of Nucleoside diphosphate kinase from Paraburkholderia phytofirmans (strain DSM 17436 / LMG 22146 / PsJN) (Burkholderia phytofirmans).